A 763-amino-acid polypeptide reads, in one-letter code: Phosphoglycerol transferase I (763 aa).

A run of 4 helical transmembrane segments spans residues 1-21 (MSEL…AWKA), 26-46 (WWFA…ITLF), 77-97 (ILPG…LGWI), and 108-128 (FGYS…SPAF).

It belongs to the OpgB family.

The protein localises to the cell inner membrane. It catalyses the reaction a phosphatidylglycerol + a membrane-derived-oligosaccharide D-glucose = a 1,2-diacyl-sn-glycerol + a membrane-derived-oligosaccharide 6-(glycerophospho)-D-glucose.. Its pathway is glycan metabolism; osmoregulated periplasmic glucan (OPG) biosynthesis. Its function is as follows. Transfers a phosphoglycerol residue from phosphatidylglycerol to the membrane-bound nascent glucan backbones. This chain is Phosphoglycerol transferase I, found in Shigella boydii serotype 18 (strain CDC 3083-94 / BS512).